Reading from the N-terminus, the 191-residue chain is Small ribosomal subunit protein uS7 (191 aa).

The segment at 56-80 is disordered; sequence NKSGEQGDGDGESGGKAGGIKKRSL.

Belongs to the universal ribosomal protein uS7 family. In terms of assembly, part of the 30S ribosomal subunit. Contacts proteins S9 and S11.

Functionally, one of the primary rRNA binding proteins, it binds directly to 16S rRNA where it nucleates assembly of the head domain of the 30S subunit. Is located at the subunit interface close to the decoding center, probably blocks exit of the E-site tRNA. The polypeptide is Small ribosomal subunit protein uS7 (Coxiella burnetii (strain RSA 493 / Nine Mile phase I)).